A 275-amino-acid polypeptide reads, in one-letter code: Diaminopimelate epimerase (275 aa).

2 residues coordinate substrate: Asn-20 and Asn-63. Cys-72 serves as the catalytic Proton donor. Substrate-binding positions include 73–74, Asn-179, and 197–198; these read GN and ER. The active-site Proton acceptor is the Cys-207. 208–209 serves as a coordination point for substrate; it reads GT.

It belongs to the diaminopimelate epimerase family. As to quaternary structure, homodimer.

It localises to the cytoplasm. It carries out the reaction (2S,6S)-2,6-diaminopimelate = meso-2,6-diaminopimelate. Its pathway is amino-acid biosynthesis; L-lysine biosynthesis via DAP pathway; DL-2,6-diaminopimelate from LL-2,6-diaminopimelate: step 1/1. Its function is as follows. Catalyzes the stereoinversion of LL-2,6-diaminopimelate (L,L-DAP) to meso-diaminopimelate (meso-DAP), a precursor of L-lysine and an essential component of the bacterial peptidoglycan. In Chlamydia trachomatis serovar L2 (strain ATCC VR-902B / DSM 19102 / 434/Bu), this protein is Diaminopimelate epimerase.